Here is a 547-residue protein sequence, read N- to C-terminus: Chaperonin GroEL (547 aa).

Residues 30 to 33 (TLGP), lysine 51, 87 to 91 (DGTTT), glycine 415, 479 to 481 (NAA), and aspartate 495 each bind ATP.

This sequence belongs to the chaperonin (HSP60) family. In terms of assembly, forms a cylinder of 14 subunits composed of two heptameric rings stacked back-to-back. Interacts with the co-chaperonin GroES.

It is found in the cytoplasm. The enzyme catalyses ATP + H2O + a folded polypeptide = ADP + phosphate + an unfolded polypeptide.. In terms of biological role, together with its co-chaperonin GroES, plays an essential role in assisting protein folding. The GroEL-GroES system forms a nano-cage that allows encapsulation of the non-native substrate proteins and provides a physical environment optimized to promote and accelerate protein folding. In Cupriavidus pinatubonensis (strain JMP 134 / LMG 1197) (Cupriavidus necator (strain JMP 134)), this protein is Chaperonin GroEL.